We begin with the raw amino-acid sequence, 306 residues long: Isoaspartyl peptidase/L-asparaginase (306 aa).

The Nucleophile role is filled by Thr174. Substrate is bound by residues 202–205 (RIGD) and 224–227 (TGKG).

This sequence belongs to the Ntn-hydrolase family. As to quaternary structure, heterotetramer of two alpha and two beta chains arranged as a dimer of alpha/beta heterodimers. Cleaved into an alpha and beta chain by autocatalysis; this activates the enzyme. The N-terminal residue of the beta subunit is responsible for the nucleophile hydrolase activity. Developing seeds.

It carries out the reaction Cleavage of a beta-linked Asp residue from the N-terminus of a polypeptide.. Degrades proteins damaged by L-isoaspartyl residue formation (also known as beta-Asp residues). Also has L-asparaginase activity, which is used to liberate stored nitrogen during seed development. In Lupinus arboreus (Tree lupine), this protein is Isoaspartyl peptidase/L-asparaginase.